An 85-amino-acid polypeptide reads, in one-letter code: Small ribosomal subunit protein uS17 (85 aa).

Belongs to the universal ribosomal protein uS17 family. In terms of assembly, part of the 30S ribosomal subunit.

In terms of biological role, one of the primary rRNA binding proteins, it binds specifically to the 5'-end of 16S ribosomal RNA. This is Small ribosomal subunit protein uS17 from Anaeromyxobacter dehalogenans (strain 2CP-1 / ATCC BAA-258).